A 187-amino-acid chain; its full sequence is UPF0301 protein YqgE (187 aa).

It belongs to the UPF0301 (AlgH) family.

The protein is UPF0301 protein YqgE of Escherichia coli O127:H6 (strain E2348/69 / EPEC).